The primary structure comprises 81 residues: Translational regulator CsrA (81 aa).

It belongs to the CsrA/RsmA family. In terms of assembly, homodimer; the beta-strands of each monomer intercalate to form a hydrophobic core, while the alpha-helices form wings that extend away from the core.

It is found in the cytoplasm. In terms of biological role, a translational regulator that binds mRNA to regulate translation initiation and/or mRNA stability. Usually binds in the 5'-UTR at or near the Shine-Dalgarno sequence preventing ribosome-binding, thus repressing translation. Its main target seems to be the major flagellin gene, while its function is anatagonized by FliW. This is Translational regulator CsrA from Desulforapulum autotrophicum (strain ATCC 43914 / DSM 3382 / VKM B-1955 / HRM2) (Desulfobacterium autotrophicum).